A 371-amino-acid polypeptide reads, in one-letter code: Anhydro-N-acetylmuramic acid kinase (371 aa).

Gly-12–Asp-20 is an ATP binding site.

This sequence belongs to the anhydro-N-acetylmuramic acid kinase family.

It carries out the reaction 1,6-anhydro-N-acetyl-beta-muramate + ATP + H2O = N-acetyl-D-muramate 6-phosphate + ADP + H(+). The protein operates within amino-sugar metabolism; 1,6-anhydro-N-acetylmuramate degradation. It functions in the pathway cell wall biogenesis; peptidoglycan recycling. Functionally, catalyzes the specific phosphorylation of 1,6-anhydro-N-acetylmuramic acid (anhMurNAc) with the simultaneous cleavage of the 1,6-anhydro ring, generating MurNAc-6-P. Is required for the utilization of anhMurNAc either imported from the medium or derived from its own cell wall murein, and thus plays a role in cell wall recycling. The protein is Anhydro-N-acetylmuramic acid kinase of Brucella anthropi (strain ATCC 49188 / DSM 6882 / CCUG 24695 / JCM 21032 / LMG 3331 / NBRC 15819 / NCTC 12168 / Alc 37) (Ochrobactrum anthropi).